The following is a 141-amino-acid chain: Large ribosomal subunit protein uL11 (141 aa).

This sequence belongs to the universal ribosomal protein uL11 family. Part of the ribosomal stalk of the 50S ribosomal subunit. Interacts with L10 and the large rRNA to form the base of the stalk. L10 forms an elongated spine to which L12 dimers bind in a sequential fashion forming a multimeric L10(L12)X complex. One or more lysine residues are methylated.

Functionally, forms part of the ribosomal stalk which helps the ribosome interact with GTP-bound translation factors. In Synechococcus sp. (strain RCC307), this protein is Large ribosomal subunit protein uL11.